A 1066-amino-acid polypeptide reads, in one-letter code: Thyrotropin-releasing hormone-degrading ectoenzyme (1066 aa).

A compositionally biased stretch (basic and acidic residues) spans 1 to 14; it reads MALDGERGEQEEEK. A disordered region spans residues 1-43; that stretch reads MALDGERGEQEEEKKKKKKKKKRKKKEEEGAEKSSSPFAATMG. Over 1–81 the chain is Cytoplasmic; sequence MALDGERGEQ…ERHIAVHKRL (81 aa). Residues 15-25 show a composition bias toward basic residues; that stretch reads KKKKKKKKRKK. Residue threonine 71 is modified to Phosphothreonine; by PKC. Residues 82 to 102 form a helical; Signal-anchor for type II membrane protein membrane-spanning segment; sequence VLAFAVSIVALLAVTMLAVLL. The Extracellular segment spans residues 103-1066; that stretch reads SLRFDECGAS…FQWLGKAMRH (964 aa). The interval 118–176 is disordered; that stretch reads TDGGLGGFPERDSNSSFPGSARRNHHAGGESSQRESGEVGTPGTPSAQPPSEEEREQWQ. N-linked (GlcNAc...) asparagine glycans are attached at residues asparagine 131, asparagine 202, asparagine 217, asparagine 264, and asparagine 380. Residue 446-450 participates in substrate binding; sequence AAMEN. Histidine 482 serves as a coordination point for Zn(2+). Residue glutamate 483 is the Proton acceptor of the active site. Residues histidine 486 and glutamate 505 each coordinate Zn(2+). 7 N-linked (GlcNAc...) asparagine glycosylation sites follow: asparagine 647, asparagine 676, asparagine 691, asparagine 705, asparagine 726, asparagine 842, and asparagine 948.

The protein belongs to the peptidase M1 family. In terms of assembly, homodimer; disulfide-linked. Requires Zn(2+) as cofactor.

It is found in the membrane. The catalysed reaction is Release of the N-terminal pyroglutamyl group from pGlu-|-His-Xaa tripeptides and pGlu-|-His-Xaa-Gly tetrapeptides.. Its function is as follows. Specific inactivation of TRH after its release. The protein is Thyrotropin-releasing hormone-degrading ectoenzyme (Trhde) of Mus musculus (Mouse).